The chain runs to 1058 residues: Probable plasma membrane ATPase (1058 aa).

Positions 1–29 (MDNNQIPKNSPESSAINSAESSPKSNVSS) are enriched in polar residues. The interval 1-123 (MDNNQIPKNS…SSSGKKEEDY (123 aa)) is disordered. Over 1–212 (MDNNQIPKNS…DVKRYPILEF (212 aa)) the chain is Cytoplasmic. Residues 31–40 (VLHENHHKEQ) show a composition bias toward basic and acidic residues. The segment covering 41–66 (QQLQQQLQQEQQQQQLPTTPQSEPTQ) has biased composition (low complexity). Residues 96–111 (SLKTISGYPSSKNTEA) show a composition bias toward polar residues. Residues 213–232 (LYFMWNPLSWTMEVAAIVSI) form a helical membrane-spanning segment. Residues 233-237 (ALLDW) are Extracellular-facing. Residues 238 to 258 (VDFILICALLLLNATIGFIEE) traverse the membrane as a helical segment. Residues 259–387 (NTAGNAVEAL…GHLQVILRNI (129 aa)) are Cytoplasmic-facing. Residues 388 to 407 (GLFCISFIAIWVLVELLVDF) form a helical membrane-spanning segment. The Extracellular portion of the chain corresponds to 408-425 (LGYDGYCHGVGGGRCLPL). The helical transmembrane segment at 426–447 (NNALVLLVGGIPIAMPTVLSVT) threads the bilayer. The Cytoplasmic portion of the chain corresponds to 448–783 (MAIGATQLSK…SSRKIFQRMR (336 aa)). Asp-480 functions as the 4-aspartylphosphate intermediate in the catalytic mechanism. Positions 728 and 732 each coordinate Mg(2+). The helical transmembrane segment at 784 to 805 (NYVIYSVAATVRICTTFGILTV) threads the bilayer. At 806–810 (AWNFK) the chain is on the extracellular side. A helical membrane pass occupies residues 811–833 (FPTIATVIIAILNDGTMLTISKD). At 834-849 (RVRARNEPDQWNLFEV) the chain is on the cytoplasmic side. A helical transmembrane segment spans residues 850–870 (FTMALCYGFYLVGSTIVFFAI). At 871-889 (IHDGTWFHDAINLRILTDN) the chain is on the extracellular side. The chain crosses the membrane as a helical span at residues 890–910 (ELRGLIYLQVSISGLATIFVS). Residues 911–922 (RSQGFSYFERPG) are Cytoplasmic-facing. Residues 923-943 (NLVIFAFVMSQIVATFIGVYG) traverse the membrane as a helical segment. Over 944 to 967 (FRGYPHDSFSDNPDYPVHGTNFQG) the chain is Extracellular. The chain crosses the membrane as a helical span at residues 968–988 (CGWGWAVCAWIWCFLWYIPMD). Topologically, residues 989–1058 (FIKLGVTYIL…HKSVVTDNKV (70 aa)) are cytoplasmic.

Belongs to the cation transport ATPase (P-type) (TC 3.A.3) family. Type IIIA subfamily.

Its subcellular location is the cell membrane. The catalysed reaction is ATP + H2O + H(+)(in) = ADP + phosphate + 2 H(+)(out). Acid pH levels increase its ATPase activity. Its function is as follows. P-type plasma membrane H+-ATPase (proton pump). The proton gradient it generates drives the active transport of nutrients by H(+) symport. The resulting external acidification and/or internal alkinization may mediate growth responses. In Dictyostelium discoideum (Social amoeba), this protein is Probable plasma membrane ATPase (patB).